The following is a 741-amino-acid chain: Catalase-peroxidase (741 aa).

Residues 1-23 (MLKKIITALGMSGMLLASSNAIA) form the signal peptide. Residues 102 to 223 (WHDAGTYRIY…YAATQMGLIY (122 aa)) constitute a cross-link (tryptophyl-tyrosyl-methioninium (Trp-Tyr) (with M-249)). Catalysis depends on His103, which acts as the Proton acceptor. The tryptophyl-tyrosyl-methioninium (Tyr-Met) (with W-102) cross-link spans 223–249 (YVNPEGPDGKPDIKGAASEIRQAFRAM). Residue His264 participates in heme b binding.

The protein belongs to the peroxidase family. Peroxidase/catalase subfamily. Homodimer or homotetramer. The cofactor is heme b. In terms of processing, formation of the three residue Trp-Tyr-Met cross-link is important for the catalase, but not the peroxidase activity of the enzyme.

It catalyses the reaction H2O2 + AH2 = A + 2 H2O. It carries out the reaction 2 H2O2 = O2 + 2 H2O. Functionally, bifunctional enzyme with both catalase and broad-spectrum peroxidase activity. This chain is Catalase-peroxidase, found in Francisella tularensis subsp. holarctica (strain FTNF002-00 / FTA).